The sequence spans 533 residues: Probable RNA-binding protein 46 (533 aa).

3 consecutive RRM domains span residues 61–139 (CEVF…VSLD), 141–223 (CRLF…WADP), and 236–308 (KVLY…LAKP).

Interacts with YTHDC2, MEIOC, MOV10, CNOT6L, DDX4, UPF1 and PABPC1.

The protein localises to the cytoplasm. Its function is as follows. Essential for male and female fertility, playing a crucial role in regulating germ cell development by ensuring the proper progression of meiosis prophase I. Regulates mitotic-to-meiotic transition in spermatogenesis by forming a complex with MEIOC and YTHDC2 which recognizes and down-regulates mitotic transcripts for a successful meiotic entry. Required for normal synaptonemal complex formation during meiosis, binding meiotic cohesin subunit mRNAs containing GCCUAU/GUUCGA motifs in their 3'UTRs regions and positively regulating their translation. Required for spermatogonial differentiation in both developing and adult testis. The polypeptide is Probable RNA-binding protein 46 (RBM46) (Homo sapiens (Human)).